Consider the following 92-residue polypeptide: MYAISFDLVVADTAQNHPKGISQAYADIGYTLRKFGFTRIQGSLYTCQNEDMANLFSAINELKALPWFPSSVRDIRAFRIEQWSDFTSLVKS.

Belongs to the VapD ribonuclease family. In terms of assembly, homodimer.

Its function is as follows. Cleaves ssRNA, mostly between U:A. This is Endoribonuclease VapD homolog from Neisseria gonorrhoeae.